The chain runs to 463 residues: Exodeoxyribonuclease 7 large subunit (463 aa).

It belongs to the XseA family. In terms of assembly, heterooligomer composed of large and small subunits.

The protein resides in the cytoplasm. It carries out the reaction Exonucleolytic cleavage in either 5'- to 3'- or 3'- to 5'-direction to yield nucleoside 5'-phosphates.. Its function is as follows. Bidirectionally degrades single-stranded DNA into large acid-insoluble oligonucleotides, which are then degraded further into small acid-soluble oligonucleotides. This Klebsiella pneumoniae (strain 342) protein is Exodeoxyribonuclease 7 large subunit.